Consider the following 351-residue polypeptide: Phosphoribosylformylglycinamidine cyclo-ligase (351 aa).

Belongs to the AIR synthase family.

It is found in the cytoplasm. It catalyses the reaction 2-formamido-N(1)-(5-O-phospho-beta-D-ribosyl)acetamidine + ATP = 5-amino-1-(5-phospho-beta-D-ribosyl)imidazole + ADP + phosphate + H(+). It participates in purine metabolism; IMP biosynthesis via de novo pathway; 5-amino-1-(5-phospho-D-ribosyl)imidazole from N(2)-formyl-N(1)-(5-phospho-D-ribosyl)glycinamide: step 2/2. This Idiomarina loihiensis (strain ATCC BAA-735 / DSM 15497 / L2-TR) protein is Phosphoribosylformylglycinamidine cyclo-ligase.